The chain runs to 185 residues: NEDD8-conjugating enzyme UBE2F (185 aa).

The segment at 1–29 (MLTLASKLKRDDGVRGPRASNPASDSTRR) is interaction with UBA3. Residues 11 to 30 (DDGVRGPRASNPASDSTRRV) form a disordered region. A UBC core domain is found at 32–185 (VRDKLLVKEV…VEDYIKRYAR (154 aa)). The active-site Glycyl thioester intermediate is C116.

Belongs to the ubiquitin-conjugating enzyme family. UBE2F subfamily.

It carries out the reaction [E1 NEDD8-activating enzyme]-S-[NEDD8 protein]-yl-L-cysteine + [E2 NEDD8-conjugating enzyme]-L-cysteine = [E1 NEDD8-activating enzyme]-L-cysteine + [E2 NEDD8-conjugating enzyme]-S-[NEDD8-protein]-yl-L-cysteine.. It functions in the pathway protein modification; protein neddylation. Accepts the ubiquitin-like protein NEDD8 from the UBA3-NAE1 E1 complex and catalyzes its covalent attachment to other proteins. Together with the E3 ubiquitin ligase RNF7/RBX2, specifically neddylates cullin-5 (CUL5). Does not neddylate CUL1, CUL2, CUL3, CUL4A or CUL4B. This Gallus gallus (Chicken) protein is NEDD8-conjugating enzyme UBE2F (UBE2F).